The primary structure comprises 247 residues: APRKFFVGGNWKMNGDKKSLGELIQTLNAAKVPFTGEIVCAPPEAYLDFARLKVDPKFGVAAQNCYKVSKGAFTGEISPAMIKDCGVTWVILGHSERRHVFGESDELIGQKVSHALSEGLGVVACIGEKLDEREAGITEGVVFEVTEVIADDVKDWSKVVLAYEPVWAIGTGKTASPQQSQELHGKLRKWLKENVSETVADSVRIIYGGSVTGATCKELASEPDVDGFLVGGASLKPEFVEYKDVRQ.

Substrate contacts are provided by N10 and K12. H94 acts as the Electrophile in catalysis. The active-site Proton acceptor is the E164.

It belongs to the triosephosphate isomerase family. In terms of assembly, homodimer.

It is found in the cytoplasm. The catalysed reaction is D-glyceraldehyde 3-phosphate = dihydroxyacetone phosphate. The enzyme catalyses dihydroxyacetone phosphate = methylglyoxal + phosphate. It participates in carbohydrate biosynthesis; gluconeogenesis. The protein operates within carbohydrate degradation; glycolysis; D-glyceraldehyde 3-phosphate from glycerone phosphate: step 1/1. Functionally, triosephosphate isomerase is an extremely efficient metabolic enzyme that catalyzes the interconversion between dihydroxyacetone phosphate (DHAP) and D-glyceraldehyde-3-phosphate (G3P) in glycolysis and gluconeogenesis. Its function is as follows. It is also responsible for the non-negligible production of methylglyoxal a reactive cytotoxic side-product that modifies and can alter proteins, DNA and lipids. The sequence is that of Triosephosphate isomerase from Latimeria chalumnae (Coelacanth).